The chain runs to 347 residues: Homoisocitrate dehydrogenase (347 aa).

68-70 (ITS) provides a ligand contact to NADH. A (2R,3S)-homoisocitrate-binding site is contributed by Ser70. The residue at position 81 (Ser81) is a Phosphoserine. (2R,3S)-homoisocitrate is bound by residues Arg87, Arg97, Arg128, Tyr135, Lys181, and Asn183. Position 183 (Asn183) interacts with NADH. Mg(2+)-binding residues include Asp213, Asp237, and Asp241. NADH contacts are provided by residues 270-274 (GSAPD) and Asn282.

This sequence belongs to the isocitrate and isopropylmalate dehydrogenases family. Mg(2+) is required as a cofactor.

The catalysed reaction is (2R,3S)-homoisocitrate + NAD(+) = 2-oxoadipate + CO2 + NADH. It carries out the reaction (2R,3S)-iso(homo)2citrate + NAD(+) = 2-oxoheptanedioate + CO2 + NADH. The enzyme catalyses (2R,3S)-iso(homo)3citrate + NAD(+) = 2-oxosuberate + CO2 + NADH. It participates in organic acid metabolism; 2-oxosuberate biosynthesis. In terms of biological role, catalyzes the NAD-dependent oxidation and decarboxylation of (2R,3S)-homoisocitrate, (2R,3S)-homo(2)-isocitrate and (2R,3S)-homo(3)-isocitrate, into 2-oxoadipate, 2-oxopimelate (2-oxoheptanedioate), and 2-oxosuberate, respectively. All these substrates are intermediates in the biosynthesis of biotin and of 7-mercaptoheptanoate, a moiety of coenzyme B in methanoarchaea. Is also able to produce 2-oxoazelate from (2R,3S)-homo(4)-isocitrate in vitro, but this substrate is probably not physiologically relevant. Is unable to use any isomer of isocitrate or isopropylmalate as a substrate, and NADP as an oxidant. This Methanocaldococcus jannaschii (strain ATCC 43067 / DSM 2661 / JAL-1 / JCM 10045 / NBRC 100440) (Methanococcus jannaschii) protein is Homoisocitrate dehydrogenase (aksF).